The following is a 46-amino-acid chain: Toxin Up-1 (46 aa).

The protein localises to the secreted. It localises to the nematocyst. It is found in the target cell membrane. This toxin is a potent hemolysin devoid of enzymatic activity. Its hemolytic activity is inhibited by sphingomyelin but not by cholesterol. In erythrocyte membranes, it causes numerous cell membrane ruptures. It also exerces cytotoxicity to different cell lines. It exerces a positive inotropic effect. Also causes hemorrhage and necrosis by dilation of the blood vessels in the skin, and vascular leakage of fluids and rupture of alveolar walls of the lungs. Is a potent ichtyotoxin. May act as a pore-forming toxin. This is Toxin Up-1 from Urticina piscivora (Fish-eating sea anemone).